The chain runs to 257 residues: G2/mitotic-specific cyclin S13-7 (257 aa).

Belongs to the cyclin family. Cyclin AB subfamily. Interacts with the CDC2 protein kinase to form a serine/threonine kinase holoenzyme complex also known as maturation promoting factor (MPF). The cyclin subunit imparts substrate specificity to the complex.

In terms of biological role, essential for the control of the cell cycle at the G2/M (mitosis) transition. The sequence is that of G2/mitotic-specific cyclin S13-7 from Glycine max (Soybean).